Consider the following 567-residue polypeptide: Urease subunit alpha (567 aa).

The Urease domain occupies 129 to 567 (GGVDTHIHWI…LPMAQRYFLF (439 aa)). The Ni(2+) site is built by histidine 134, histidine 136, and lysine 217. Lysine 217 bears the N6-carboxylysine mark. Residue histidine 219 coordinates substrate. Residues histidine 246 and histidine 272 each coordinate Ni(2+). Histidine 320 functions as the Proton donor in the catalytic mechanism. Aspartate 360 contacts Ni(2+).

This sequence belongs to the metallo-dependent hydrolases superfamily. Urease alpha subunit family. In terms of assembly, heterotrimer of UreA (gamma), UreB (beta) and UreC (alpha) subunits. Three heterotrimers associate to form the active enzyme. The cofactor is Ni cation. Post-translationally, carboxylation allows a single lysine to coordinate two nickel ions.

Its subcellular location is the cytoplasm. The catalysed reaction is urea + 2 H2O + H(+) = hydrogencarbonate + 2 NH4(+). Its pathway is nitrogen metabolism; urea degradation; CO(2) and NH(3) from urea (urease route): step 1/1. The polypeptide is Urease subunit alpha (Escherichia coli O157:H7).